The chain runs to 139 residues: MASQFELSVVSAEKEIFNGNVVSVRVSGIDGELGVYAGHTPLLTSIKPGMVKYTLENGKEEFIYVSGGFLEVQPTIVTVLADVAIRGEELDQQRILAAKRKAEDTLSKSNNAELSAKLSREIAKLRVYEIVNSKLANRR.

It belongs to the ATPase epsilon chain family. F-type ATPases have 2 components, CF(1) - the catalytic core - and CF(0) - the membrane proton channel. CF(1) has five subunits: alpha(3), beta(3), gamma(1), delta(1), epsilon(1). CF(0) has three main subunits: a, b and c.

The protein resides in the cell inner membrane. Produces ATP from ADP in the presence of a proton gradient across the membrane. The sequence is that of ATP synthase epsilon chain from Actinobacillus pleuropneumoniae serotype 5b (strain L20).